The chain runs to 196 residues: 7-methyl-GTP pyrophosphatase (196 aa).

Residue aspartate 72 is the Proton acceptor of the active site.

The protein belongs to the Maf family. YceF subfamily. A divalent metal cation is required as a cofactor.

It localises to the cytoplasm. The enzyme catalyses N(7)-methyl-GTP + H2O = N(7)-methyl-GMP + diphosphate + H(+). Nucleoside triphosphate pyrophosphatase that hydrolyzes 7-methyl-GTP (m(7)GTP). May have a dual role in cell division arrest and in preventing the incorporation of modified nucleotides into cellular nucleic acids. This Neisseria meningitidis serogroup A / serotype 4A (strain DSM 15465 / Z2491) protein is 7-methyl-GTP pyrophosphatase.